Reading from the N-terminus, the 189-residue chain is Small ribosomal subunit protein uS5 (189 aa).

Residues 22–85 form the S5 DRBM domain; sequence LIDKLVTINR…ERAKRGMIRV (64 aa). The interval 164–189 is disordered; it reads SVASRRGKKVADLFGPKREKEAPADV. Basic and acidic residues predominate over residues 172–189; that stretch reads KVADLFGPKREKEAPADV.

This sequence belongs to the universal ribosomal protein uS5 family. As to quaternary structure, part of the 30S ribosomal subunit. Contacts proteins S4 and S8.

Functionally, with S4 and S12 plays an important role in translational accuracy. Its function is as follows. Located at the back of the 30S subunit body where it stabilizes the conformation of the head with respect to the body. In Acidiphilium cryptum (strain JF-5), this protein is Small ribosomal subunit protein uS5.